Here is a 359-residue protein sequence, read N- to C-terminus: DNA-directed RNA polymerase subunit alpha (359 aa).

The tract at residues 1 to 226 is alpha N-terminal domain (alpha-NTD); sequence MLISQRPSLA…ELFGLARELN (226 aa). The interval 241–359 is alpha C-terminal domain (alpha-CTD); sequence ADTIAAYAMP…GQDYAETEQL (119 aa). The disordered stretch occupies residues 315–359; it reads FDPSAAAAEYPSEGWASETETVGGLGRVEDNGYDDGQDYAETEQL. Over residues 345–359 the composition is skewed to acidic residues; it reads NGYDDGQDYAETEQL.

This sequence belongs to the RNA polymerase alpha chain family. As to quaternary structure, homodimer. The RNAP catalytic core consists of 2 alpha, 1 beta, 1 beta' and 1 omega subunit. When a sigma factor is associated with the core the holoenzyme is formed, which can initiate transcription.

It catalyses the reaction RNA(n) + a ribonucleoside 5'-triphosphate = RNA(n+1) + diphosphate. In terms of biological role, DNA-dependent RNA polymerase catalyzes the transcription of DNA into RNA using the four ribonucleoside triphosphates as substrates. This Saccharopolyspora erythraea (strain ATCC 11635 / DSM 40517 / JCM 4748 / NBRC 13426 / NCIMB 8594 / NRRL 2338) protein is DNA-directed RNA polymerase subunit alpha.